A 380-amino-acid chain; its full sequence is Cytochrome b (380 aa).

A run of 4 helical transmembrane segments spans residues 33–53 (FGSL…FLAM), 77–98 (WLIR…YMHI), 113–133 (WNIG…GYVL), and 178–198 (FFAF…LHLL). Residues His83 and His97 each coordinate heme b. Residues His182 and His196 each contribute to the heme b site. Residue His201 coordinates a ubiquinone. The next 4 helical transmembrane spans lie at 226–246 (YKDL…ALFA), 288–308 (LGGV…PILH), 320–340 (LTQF…WIGG), and 347–367 (FIII…VLSP).

It belongs to the cytochrome b family. In terms of assembly, the cytochrome bc1 complex contains 3 respiratory subunits (MT-CYB, CYC1 and UQCRFS1), 2 core proteins (UQCRC1 and UQCRC2) and probably 6 low-molecular weight proteins. Heme b is required as a cofactor.

Its subcellular location is the mitochondrion inner membrane. Component of the ubiquinol-cytochrome c reductase complex (complex III or cytochrome b-c1 complex) that is part of the mitochondrial respiratory chain. The b-c1 complex mediates electron transfer from ubiquinol to cytochrome c. Contributes to the generation of a proton gradient across the mitochondrial membrane that is then used for ATP synthesis. This Oncorhynchus mykiss (Rainbow trout) protein is Cytochrome b (mt-cyb).